An 89-amino-acid polypeptide reads, in one-letter code: Small ribosomal subunit protein bS20 (89 aa).

It belongs to the bacterial ribosomal protein bS20 family.

Binds directly to 16S ribosomal RNA. This Wolbachia sp. subsp. Drosophila simulans (strain wRi) protein is Small ribosomal subunit protein bS20.